The sequence spans 509 residues: Putative thymidine phosphorylase (509 aa).

The protein belongs to the thymidine/pyrimidine-nucleoside phosphorylase family. Type 2 subfamily.

The enzyme catalyses thymidine + phosphate = 2-deoxy-alpha-D-ribose 1-phosphate + thymine. The sequence is that of Putative thymidine phosphorylase from Chelativorans sp. (strain BNC1).